We begin with the raw amino-acid sequence, 392 residues long: Galactokinase (392 aa).

40–43 lines the substrate pocket; that stretch reads EHID. ATP contacts are provided by residues S74 and 128–134; that span reads GSGLSSS. Residues S134 and E167 each coordinate Mg(2+). The active-site Proton acceptor is the D179. Residue Y229 participates in substrate binding.

The protein belongs to the GHMP kinase family. GalK subfamily.

The protein resides in the cytoplasm. It catalyses the reaction alpha-D-galactose + ATP = alpha-D-galactose 1-phosphate + ADP + H(+). It functions in the pathway carbohydrate metabolism; galactose metabolism. In terms of biological role, catalyzes the transfer of the gamma-phosphate of ATP to D-galactose to form alpha-D-galactose-1-phosphate (Gal-1-P). This is Galactokinase from Clostridium tetani (strain Massachusetts / E88).